The chain runs to 63 residues: UPF0391 membrane protein lpg2415 (63 aa).

2 helical membrane-spanning segments follow: residues 4–24 and 33–53; these read WALI…RGVA and VLFF…LLGG.

This sequence belongs to the UPF0391 family.

It is found in the cell membrane. The sequence is that of UPF0391 membrane protein lpg2415 from Legionella pneumophila subsp. pneumophila (strain Philadelphia 1 / ATCC 33152 / DSM 7513).